The primary structure comprises 576 residues: Arginine--tRNA ligase (576 aa).

Residues 122-132 (PNVAKEMHVGH) carry the 'HIGH' region motif.

It belongs to the class-I aminoacyl-tRNA synthetase family. As to quaternary structure, monomer.

The protein localises to the cytoplasm. It catalyses the reaction tRNA(Arg) + L-arginine + ATP = L-arginyl-tRNA(Arg) + AMP + diphosphate. The polypeptide is Arginine--tRNA ligase (Mannheimia succiniciproducens (strain KCTC 0769BP / MBEL55E)).